The chain runs to 330 residues: Beta-ketoacyl-[acyl-carrier-protein] synthase III (330 aa).

Catalysis depends on residues Cys-114 and His-255. The segment at 256-260 (QANQR) is ACP-binding. Residue Asn-285 is part of the active site.

It belongs to the thiolase-like superfamily. FabH family. As to quaternary structure, homodimer.

It localises to the cytoplasm. It carries out the reaction malonyl-[ACP] + acetyl-CoA + H(+) = 3-oxobutanoyl-[ACP] + CO2 + CoA. It functions in the pathway lipid metabolism; fatty acid biosynthesis. Catalyzes the condensation reaction of fatty acid synthesis by the addition to an acyl acceptor of two carbons from malonyl-ACP. Catalyzes the first condensation reaction which initiates fatty acid synthesis and may therefore play a role in governing the total rate of fatty acid production. Possesses both acetoacetyl-ACP synthase and acetyl transacylase activities. Its substrate specificity determines the biosynthesis of branched-chain and/or straight-chain of fatty acids. The chain is Beta-ketoacyl-[acyl-carrier-protein] synthase III from Nostoc sp. (strain PCC 7120 / SAG 25.82 / UTEX 2576).